The sequence spans 238 residues: uncharacterized protein (238 aa).

The next 7 membrane-spanning stretches (helical) occupy residues 19-39, 64-84, 85-105, 112-132, 141-161, 176-196, and 218-238; these read FIYG…LLGW, WSVI…IYNW, QVLY…YFTK, LWND…SYYF, ILWV…YVKS, VIFH…ILAL, and VGLI…VATL.

This sequence to B.subtilis YwiC.

It is found in the cell membrane. This is an uncharacterized protein from Haemophilus influenzae (strain ATCC 51907 / DSM 11121 / KW20 / Rd).